The chain runs to 377 residues: Glutamate 5-kinase (377 aa).

Residue lysine 22 coordinates ATP. Positions 62, 149, and 161 each coordinate substrate. Residues 181 to 182 and 223 to 229 each bind ATP; these read TD and TGGMVTK. The PUA domain occupies 285 to 363; that stretch reads RGVLVADSGA…AQLRRLLGEE (79 aa).

The protein belongs to the glutamate 5-kinase family.

It is found in the cytoplasm. It catalyses the reaction L-glutamate + ATP = L-glutamyl 5-phosphate + ADP. It participates in amino-acid biosynthesis; L-proline biosynthesis; L-glutamate 5-semialdehyde from L-glutamate: step 1/2. Its function is as follows. Catalyzes the transfer of a phosphate group to glutamate to form L-glutamate 5-phosphate. This chain is Glutamate 5-kinase, found in Bifidobacterium animalis subsp. lactis (strain AD011).